The following is a 118-amino-acid chain: Small ribosomal subunit protein uS13 (118 aa).

The disordered stretch occupies residues 94–118 (GLPVRGQRTKTNARTRKGPRKPIKK).

It belongs to the universal ribosomal protein uS13 family. In terms of assembly, part of the 30S ribosomal subunit. Forms a loose heterodimer with protein S19. Forms two bridges to the 50S subunit in the 70S ribosome.

Functionally, located at the top of the head of the 30S subunit, it contacts several helices of the 16S rRNA. In the 70S ribosome it contacts the 23S rRNA (bridge B1a) and protein L5 of the 50S subunit (bridge B1b), connecting the 2 subunits; these bridges are implicated in subunit movement. Contacts the tRNAs in the A and P-sites. The polypeptide is Small ribosomal subunit protein uS13 (Pasteurella multocida (strain Pm70)).